Consider the following 141-residue polypeptide: Hemoglobin subunit alpha (141 aa).

A Globin domain is found at 1–141 (VLSEEDKSHV…VSAMLTSKYR (141 aa)). Residue histidine 58 coordinates O2. Histidine 87 provides a ligand contact to heme b.

This sequence belongs to the globin family. As to quaternary structure, heterotetramer of two alpha chains and two beta chains. In terms of tissue distribution, red blood cells.

Its function is as follows. Involved in oxygen transport from the lung to the various peripheral tissues. In Caiman crocodilus (Spectacled caiman), this protein is Hemoglobin subunit alpha (HBA).